Reading from the N-terminus, the 294-residue chain is Urease accessory protein UreD (294 aa).

Positions 1 to 22 (MSVEKPVAAGRQNSKATGRHKG) are disordered.

Belongs to the UreD family. In terms of assembly, ureD, UreF and UreG form a complex that acts as a GTP-hydrolysis-dependent molecular chaperone, activating the urease apoprotein by helping to assemble the nickel containing metallocenter of UreC. The UreE protein probably delivers the nickel.

It localises to the cytoplasm. In terms of biological role, required for maturation of urease via the functional incorporation of the urease nickel metallocenter. This is Urease accessory protein UreD from Alcanivorax borkumensis (strain ATCC 700651 / DSM 11573 / NCIMB 13689 / SK2).